We begin with the raw amino-acid sequence, 137 residues long: Nucleoside diphosphate kinase (137 aa).

Residues Lys9, Phe57, Arg85, Thr91, Arg102, and Asn112 each coordinate ATP. The active-site Pros-phosphohistidine intermediate is His115.

The protein belongs to the NDK family. Homotetramer. Mg(2+) serves as cofactor.

The protein localises to the cytoplasm. The enzyme catalyses a 2'-deoxyribonucleoside 5'-diphosphate + ATP = a 2'-deoxyribonucleoside 5'-triphosphate + ADP. It catalyses the reaction a ribonucleoside 5'-diphosphate + ATP = a ribonucleoside 5'-triphosphate + ADP. Its function is as follows. Major role in the synthesis of nucleoside triphosphates other than ATP. The ATP gamma phosphate is transferred to the NDP beta phosphate via a ping-pong mechanism, using a phosphorylated active-site intermediate. In Sulfurovum sp. (strain NBC37-1), this protein is Nucleoside diphosphate kinase.